The sequence spans 341 residues: Adenine deaminase (341 aa).

3 residues coordinate Zn(2+): His-17, His-19, and His-197. Residue Glu-200 is the Proton donor of the active site. Zn(2+) is bound at residue Asp-278. Asp-279 serves as a coordination point for substrate.

This sequence belongs to the metallo-dependent hydrolases superfamily. Adenosine and AMP deaminases family. Adenine deaminase type 2 subfamily. The cofactor is Zn(2+).

The catalysed reaction is adenine + H2O + H(+) = hypoxanthine + NH4(+). Functionally, catalyzes the hydrolytic deamination of adenine to hypoxanthine. Plays an important role in the purine salvage pathway and in nitrogen catabolism. The chain is Adenine deaminase from Chlorobium luteolum (strain DSM 273 / BCRC 81028 / 2530) (Pelodictyon luteolum).